The primary structure comprises 602 residues: DNA ligase (602 aa).

ATP is bound at residue glutamate 262. The active-site N6-AMP-lysine intermediate is the lysine 264. Residues arginine 269, arginine 284, glutamate 314, phenylalanine 354, arginine 431, and lysine 437 each coordinate ATP.

It belongs to the ATP-dependent DNA ligase family. As to quaternary structure, monomer. Mg(2+) serves as cofactor. Requires Mn(2+) as cofactor.

The enzyme catalyses ATP + (deoxyribonucleotide)n-3'-hydroxyl + 5'-phospho-(deoxyribonucleotide)m = (deoxyribonucleotide)n+m + AMP + diphosphate.. It catalyses the reaction ADP + (deoxyribonucleotide)n-3'-hydroxyl + 5'-phospho-(deoxyribonucleotide)m = (deoxyribonucleotide)n+m + AMP + phosphate.. It carries out the reaction GTP + (deoxyribonucleotide)n-3'-hydroxyl + 5'-phospho-(deoxyribonucleotide)m = (deoxyribonucleotide)n+m + GMP + diphosphate.. Its activity is regulated as follows. Inhibited in the presence of 100 mM KCl, NaCl or NH(4)Cl. DNA ligase that seals nicks in double-stranded DNA during DNA replication, DNA recombination and DNA repair. Can also use ADP, but not NAD(+). This Aeropyrum pernix (strain ATCC 700893 / DSM 11879 / JCM 9820 / NBRC 100138 / K1) protein is DNA ligase.